Here is a 354-residue protein sequence, read N- to C-terminus: Probable cinnamyl alcohol dehydrogenase 1 (354 aa).

Zn(2+)-binding residues include Cys-47, His-69, Glu-70, Cys-100, Cys-103, Cys-106, Cys-114, and Cys-163. NADP(+) is bound by residues Thr-167, 188–193, 211–216, Thr-251, and 297–299; these read GLGGLG, STSESK, and SVT.

Belongs to the zinc-containing alcohol dehydrogenase family. Homodimer. The cofactor is Zn(2+).

The enzyme catalyses (E)-cinnamyl alcohol + NADP(+) = (E)-cinnamaldehyde + NADPH + H(+). The catalysed reaction is (E)-coniferol + NADP(+) = (E)-coniferaldehyde + NADPH + H(+). It catalyses the reaction (E)-sinapyl alcohol + NADP(+) = (E)-sinapaldehyde + NADPH + H(+). It carries out the reaction (E)-4-coumaroyl alcohol + NADP(+) = (E)-4-coumaraldehyde + NADPH + H(+). The enzyme catalyses (E)-caffeyl alcohol + NADP(+) = (E)-caffeyl aldehyde + NADPH + H(+). Its pathway is aromatic compound metabolism; phenylpropanoid biosynthesis. Its function is as follows. Involved in lignin biosynthesis. Catalyzes the final step specific for the production of lignin monomers. Catalyzes the NADPH-dependent reduction of coniferaldehyde, 5-hydroxyconiferaldehyde, sinapaldehyde, 4-coumaraldehyde and caffeyl aldehyde to their respective alcohols. This chain is Probable cinnamyl alcohol dehydrogenase 1, found in Oryza sativa subsp. japonica (Rice).